The primary structure comprises 136 residues: MAKFLKAGKVAVVVRGRYAGKKVVIVKPHDEGSKSHPFGHALVAGIERYPSKVTKKHGAKKVAKRTKIKPFIKVVNYNHLLPTRYTLDVEAFKSVVSTETFEQPSQREEAKKVVKKAFEERHQAGKNQWFFSKLRF.

Belongs to the eukaryotic ribosomal protein eL27 family. As to quaternary structure, component of the large ribosomal subunit (LSU). Mature yeast ribosomes consist of a small (40S) and a large (60S) subunit. The 40S small subunit contains 1 molecule of ribosomal RNA (18S rRNA) and 33 different proteins (encoded by 57 genes). The large 60S subunit contains 3 rRNA molecules (25S, 5.8S and 5S rRNA) and 46 different proteins (encoded by 81 genes).

It localises to the cytoplasm. In terms of biological role, component of the ribosome, a large ribonucleoprotein complex responsible for the synthesis of proteins in the cell. The small ribosomal subunit (SSU) binds messenger RNAs (mRNAs) and translates the encoded message by selecting cognate aminoacyl-transfer RNA (tRNA) molecules. The large subunit (LSU) contains the ribosomal catalytic site termed the peptidyl transferase center (PTC), which catalyzes the formation of peptide bonds, thereby polymerizing the amino acids delivered by tRNAs into a polypeptide chain. The nascent polypeptides leave the ribosome through a tunnel in the LSU and interact with protein factors that function in enzymatic processing, targeting, and the membrane insertion of nascent chains at the exit of the ribosomal tunnel. The sequence is that of Large ribosomal subunit protein eL27B from Saccharomyces cerevisiae (strain ATCC 204508 / S288c) (Baker's yeast).